We begin with the raw amino-acid sequence, 256 residues long: Alcohol dehydrogenase (256 aa).

12–35 (FVAGLGGIGLDTSKELVKRDLKNL) is an NAD(+) binding site. Ser140 contributes to the substrate binding site. The active-site Proton acceptor is the Tyr153.

Belongs to the short-chain dehydrogenases/reductases (SDR) family. In terms of assembly, homodimer.

The catalysed reaction is a primary alcohol + NAD(+) = an aldehyde + NADH + H(+). It carries out the reaction a secondary alcohol + NAD(+) = a ketone + NADH + H(+). The sequence is that of Alcohol dehydrogenase (Adh) from Drosophila tsacasi (Fruit fly).